Here is a 323-residue protein sequence, read N- to C-terminus: Methenyltetrahydromethanopterin cyclohydrolase (323 aa).

It belongs to the MCH family.

The protein resides in the cytoplasm. It carries out the reaction 5,10-methenyl-5,6,7,8-tetrahydromethanopterin + H2O = N(5)-formyl-5,6,7,8-tetrahydromethanopterin + H(+). It participates in one-carbon metabolism; methanogenesis from CO(2); 5,10-methenyl-5,6,7,8-tetrahydromethanopterin from CO(2): step 3/3. In terms of biological role, catalyzes the reversible interconversion of 5-formyl-H(4)MPT to methenyl-H(4)MPT(+). This is Methenyltetrahydromethanopterin cyclohydrolase from Methanococcus maripaludis (strain C5 / ATCC BAA-1333).